Consider the following 373-residue polypeptide: Structure-specific endonuclease subunit EME2 (373 aa).

The interval 24–52 (RPQTWEISDSDGEGVPAREVGTQAPSPAG) is disordered. Residues 47 to 260 (APSPAGERRA…LPSKQHRDSQ (214 aa)) form a nuclease-like domain; forms the post-nick DNA binding interface and is involved in DNA recognition and bending region. Residues 282–373 (GLRGVWWRQI…NPDLLLDLSS (92 aa)) form a helix-hairpin-helix (2HhH); forms the pre-nick DNA binding interface and is involved in DNA recognition and bending region.

The protein belongs to the EME1/MMS4 family. Part of the heterodimeric MUS81-EME2 complex; the complex forms specifically during the DNA replication phase of the cell cycle.

The protein localises to the nucleus. In terms of biological role, non-catalytic subunit of the structure-specific, heterodimeric DNA endonuclease MUS81-EME2 which is involved in the maintenance of genome stability. In the complex, EME2 is required for DNA cleavage, participating in DNA recognition and bending. MUS81-EME2 cleaves 3'-flaps and nicked Holliday junctions, and exhibit limited endonuclease activity with 5' flaps and nicked double-stranded DNAs. MUS81-EME2 which is active during the replication of DNA is more specifically involved in replication fork processing. Replication forks frequently encounter obstacles to their passage, including DNA base lesions, DNA interstrand cross-links, difficult-to-replicate sequences, transcription bubbles, or tightly bound proteins. One mechanism for the restart of a stalled replication fork involves nucleolytic cleavage mediated by the MUS81-EME2 endonuclease. By acting upon the stalled fork, MUS81-EME2 generates a DNA double-strand break (DSB) that can be repaired by homologous recombination, leading to the restoration of an active fork. MUS81-EME2 could also function in telomere maintenance. This is Structure-specific endonuclease subunit EME2 from Mus musculus (Mouse).